The primary structure comprises 432 residues: Adenylosuccinate synthetase (432 aa).

GTP contacts are provided by residues 12–18 (GDEGKGK) and 40–42 (GHT). The Proton acceptor role is filled by Asp-13. The Mg(2+) site is built by Asp-13 and Gly-40. IMP is bound by residues 13-16 (DEGK), 38-41 (NAGH), Thr-129, Arg-143, Gln-224, Thr-239, and Arg-303. Residue His-41 is the Proton donor of the active site. 299–305 (VTTGRRR) provides a ligand contact to substrate. GTP is bound by residues Arg-305, 331–333 (KLD), and 413–415 (GVG).

Belongs to the adenylosuccinate synthetase family. Homodimer. The cofactor is Mg(2+).

The protein localises to the cytoplasm. The enzyme catalyses IMP + L-aspartate + GTP = N(6)-(1,2-dicarboxyethyl)-AMP + GDP + phosphate + 2 H(+). The protein operates within purine metabolism; AMP biosynthesis via de novo pathway; AMP from IMP: step 1/2. In terms of biological role, plays an important role in the de novo pathway of purine nucleotide biosynthesis. Catalyzes the first committed step in the biosynthesis of AMP from IMP. The chain is Adenylosuccinate synthetase from Mycobacterium leprae (strain TN).